The following is a 256-amino-acid chain: Nuclear shuttle protein (256 aa).

The interval 1–53 is disordered; the sequence is MYPSRNKRGSYFNQRRQYSRNHVWKRPTAAKRHDWKRRPSNTSKPNDEPKMSA. Over residues 17–39 the composition is skewed to basic residues; that stretch reads QYSRNHVWKRPTAAKRHDWKRRP. Positions 21–42 match the Bipartite nuclear localization signal motif; that stretch reads NHVWKRPTAAKRHDWKRRPSNT. The Nuclear localization signal signature appears at 81–96; the sequence is DLGRSEPNRSRSYIRL. Positions 150-187 are interaction with Arabidopsis thaliana NSI protein; it reads ELFGARIHSHGNLSVTPALKDRYYIRHVCKRVLSVEKD.

It belongs to the begomovirus nuclear shuttle protein family. As to quaternary structure, binds to single-stranded and double-stranded viral DNA. Interacts with the host nuclear shuttle interacting (NSI) protein. This interaction may allow NSP to recruit NSI monomers to the viral genome and thus regulate nuclear export of viral genome by NSP.

The protein localises to the host nucleus. It localises to the host cytoplasm. Its subcellular location is the host cell membrane. In terms of biological role, binds to the genomic viral ssDNA, shuttles it into and out of the cell nucleus. Begomoviruses use 2 proteins to transport their DNA from cell to cell. The nuclear shuttle protein (NSP) shuttles it between nucleus and cytoplasm and the movement protein (MP) probably transports the DNA-NSP complex to the cell periphery and facilitates movement across the cell wall. The chain is Nuclear shuttle protein from Abutilon mosaic virus (isolate West India) (AbMV).